The primary structure comprises 207 residues: Large ribosomal subunit protein uL4 (207 aa).

Residues 50–75 form a disordered region; the sequence is KTKTRSEVAGSGKKPFKQKGTGNARQ.

Belongs to the universal ribosomal protein uL4 family. Part of the 50S ribosomal subunit.

One of the primary rRNA binding proteins, this protein initially binds near the 5'-end of the 23S rRNA. It is important during the early stages of 50S assembly. It makes multiple contacts with different domains of the 23S rRNA in the assembled 50S subunit and ribosome. In terms of biological role, forms part of the polypeptide exit tunnel. This chain is Large ribosomal subunit protein uL4, found in Pelobacter propionicus (strain DSM 2379 / NBRC 103807 / OttBd1).